The following is a 1008-amino-acid chain: Probable beta-galactosidase B (1008 aa).

The N-terminal stretch at 1–18 (MLLQSLFAWALAIGPCIA) is a signal peptide. 2 N-linked (GlcNAc...) asparagine glycosylation sites follow: N20 and N23. Y87 contributes to the substrate binding site. The N-linked (GlcNAc...) asparagine glycan is linked to N108. 4 residues coordinate substrate: N132, A133, E134, and N192. The active-site Proton donor is E193. Residue N208 is glycosylated (N-linked (GlcNAc...) asparagine). Y262 serves as a coordination point for substrate. A disulfide bridge links C268 with C321. N269 is a glycosylation site (N-linked (GlcNAc...) asparagine). Residue E305 is the Nucleophile of the active site. A substrate-binding site is contributed by Y370. N-linked (GlcNAc...) asparagine glycosylation is found at N453, N594, N624, N681, N703, N782, N788, N816, N826, and N879.

This sequence belongs to the glycosyl hydrolase 35 family.

The protein localises to the secreted. It catalyses the reaction Hydrolysis of terminal non-reducing beta-D-galactose residues in beta-D-galactosides.. Its function is as follows. Cleaves beta-linked terminal galactosyl residues from gangliosides, glycoproteins, and glycosaminoglycans. The polypeptide is Probable beta-galactosidase B (lacB) (Sclerotinia sclerotiorum (strain ATCC 18683 / 1980 / Ss-1) (White mold)).